A 186-amino-acid polypeptide reads, in one-letter code: NADH-quinone oxidoreductase subunit B (186 aa).

[4Fe-4S] cluster contacts are provided by cysteine 44, cysteine 45, cysteine 110, and cysteine 139.

Belongs to the complex I 20 kDa subunit family. As to quaternary structure, NDH-1 is composed of 14 different subunits. Subunits NuoB, C, D, E, F, and G constitute the peripheral sector of the complex. Requires [4Fe-4S] cluster as cofactor.

It localises to the cell inner membrane. The enzyme catalyses a quinone + NADH + 5 H(+)(in) = a quinol + NAD(+) + 4 H(+)(out). In terms of biological role, NDH-1 shuttles electrons from NADH, via FMN and iron-sulfur (Fe-S) centers, to quinones in the respiratory chain. The immediate electron acceptor for the enzyme in this species is believed to be ubiquinone. Couples the redox reaction to proton translocation (for every two electrons transferred, four hydrogen ions are translocated across the cytoplasmic membrane), and thus conserves the redox energy in a proton gradient. In Leptospira biflexa serovar Patoc (strain Patoc 1 / Ames), this protein is NADH-quinone oxidoreductase subunit B.